Consider the following 397-residue polypeptide: Argininosuccinate synthase (397 aa).

Residue 9–17 participates in ATP binding; it reads AYSGGLDTS. Y87 contributes to the L-citrulline binding site. G117 lines the ATP pocket. 3 residues coordinate L-aspartate: T119, N123, and D124. An L-citrulline-binding site is contributed by N123. Residues R127, S175, S184, E260, and Y272 each contribute to the L-citrulline site.

Belongs to the argininosuccinate synthase family. Type 1 subfamily. Homotetramer.

The protein resides in the cytoplasm. The enzyme catalyses L-citrulline + L-aspartate + ATP = 2-(N(omega)-L-arginino)succinate + AMP + diphosphate + H(+). Its pathway is amino-acid biosynthesis; L-arginine biosynthesis; L-arginine from L-ornithine and carbamoyl phosphate: step 2/3. This Methanococcus maripaludis (strain DSM 14266 / JCM 13030 / NBRC 101832 / S2 / LL) protein is Argininosuccinate synthase.